The chain runs to 1296 residues: Phosphoribosylformylglycinamidine synthase (1296 aa).

Positions 300–325 (APFSGAATGSGGEIRDEGATGRGSKP) are disordered. Residues 304-315 (GAATGSGGEIRD) and A675 each bind ATP. E715, N719, and D885 together coordinate Mg(2+). Residue S887 participates in ATP binding. The Glutamine amidotransferase type-1 domain maps to 1043 to 1296 (MAILREQGVN…MFRNARKNVG (254 aa)). The Nucleophile role is filled by C1136. Residues 1232-1253 (TQYPANPNGSPEGITGITSTDG) form a disordered region. Catalysis depends on residues H1261 and E1263.

This sequence in the N-terminal section; belongs to the FGAMS family. In terms of assembly, monomer.

It localises to the cytoplasm. It carries out the reaction N(2)-formyl-N(1)-(5-phospho-beta-D-ribosyl)glycinamide + L-glutamine + ATP + H2O = 2-formamido-N(1)-(5-O-phospho-beta-D-ribosyl)acetamidine + L-glutamate + ADP + phosphate + H(+). It functions in the pathway purine metabolism; IMP biosynthesis via de novo pathway; 5-amino-1-(5-phospho-D-ribosyl)imidazole from N(2)-formyl-N(1)-(5-phospho-D-ribosyl)glycinamide: step 1/2. In terms of biological role, phosphoribosylformylglycinamidine synthase involved in the purines biosynthetic pathway. Catalyzes the ATP-dependent conversion of formylglycinamide ribonucleotide (FGAR) and glutamine to yield formylglycinamidine ribonucleotide (FGAM) and glutamate. The sequence is that of Phosphoribosylformylglycinamidine synthase from Pseudoalteromonas translucida (strain TAC 125).